Here is a 45-residue protein sequence, read N- to C-terminus: Defensin Tk-AMP-D4 (45 aa).

Cystine bridges form between Cys-3-Cys-45, Cys-14-Cys-34, Cys-20-Cys-39, and Cys-24-Cys-41.

Its function is as follows. Plant defense peptide. This chain is Defensin Tk-AMP-D4, found in Triticum kiharae (Wheat).